A 340-amino-acid chain; its full sequence is GTPase Obg (340 aa).

Residues 1 to 161 (MKFVDMTNIT…QHLLLELLLI (161 aa)) enclose the Obg domain. One can recognise an OBG-type G domain in the interval 162 to 335 (ANVGIFGLPN…LCNSIMKFIM (174 aa)). Residues 168 to 175 (GLPNSGKS), 193 to 197 (FTTLV), 215 to 218 (DIPG), 285 to 288 (NKID), and 316 to 318 (SSI) contribute to the GTP site. 2 residues coordinate Mg(2+): S175 and T195.

The protein belongs to the TRAFAC class OBG-HflX-like GTPase superfamily. OBG GTPase family. Monomer. Requires Mg(2+) as cofactor.

The protein resides in the cytoplasm. In terms of biological role, an essential GTPase which binds GTP, GDP and possibly (p)ppGpp with moderate affinity, with high nucleotide exchange rates and a fairly low GTP hydrolysis rate. Plays a role in control of the cell cycle, stress response, ribosome biogenesis and in those bacteria that undergo differentiation, in morphogenesis control. This chain is GTPase Obg, found in Blochmanniella pennsylvanica (strain BPEN).